The primary structure comprises 570 residues: Methionine--tRNA ligase (570 aa).

Positions 11 to 21 match the 'HIGH' region motif; sequence PYVQTVPHLGN. Zn(2+) is bound by residues Cys-143, Cys-146, Cys-156, and Cys-159. Positions 333 to 337 match the 'KMSKS' region motif; sequence KFSKS. An ATP-binding site is contributed by Lys-336.

It belongs to the class-I aminoacyl-tRNA synthetase family. MetG type 1 subfamily. Zn(2+) serves as cofactor.

The protein resides in the cytoplasm. It catalyses the reaction tRNA(Met) + L-methionine + ATP = L-methionyl-tRNA(Met) + AMP + diphosphate. In terms of biological role, is required not only for elongation of protein synthesis but also for the initiation of all mRNA translation through initiator tRNA(fMet) aminoacylation. The chain is Methionine--tRNA ligase from Pyrobaculum calidifontis (strain DSM 21063 / JCM 11548 / VA1).